The primary structure comprises 395 residues: uncharacterized protein (395 aa).

Low complexity predominate over residues Ser286 to His306. Residues Ser286 to Val395 form a disordered region. Over residues Arg350–Pro362 the composition is skewed to pro residues. The segment covering Gln364–Ser385 has biased composition (polar residues).

This is an uncharacterized protein from Caenorhabditis elegans.